Consider the following 342-residue polypeptide: C-X-C chemokine receptor type 6 (342 aa).

The Extracellular portion of the chain corresponds to 1-32 (MAEHDYHEDYGFSSFNDSSQEEHQDFLQFSKV). N-linked (GlcNAc...) asparagine glycosylation is present at N16. The chain crosses the membrane as a helical span at residues 33 to 59 (FLPCMYLVVFVCGLVGNSLVLVISIFY). Residues 60-68 (HKLQSLTDV) are Cytoplasmic-facing. A helical transmembrane segment spans residues 69 to 89 (FLVNLPLADLVFVCTLPFWAY). The Extracellular segment spans residues 90 to 103 (AGIHEWVFGQVMCK). C102 and C180 are disulfide-bonded. Residues 104–125 (SLLGIYTINFYTSMLILTCITV) form a helical membrane-spanning segment. At 126–143 (DRFIVVVKATKAYNQQAK) the chain is on the cytoplasmic side. A helical transmembrane segment spans residues 144–164 (RMTWGKVTSLLIWVISLLVSL). The Extracellular portion of the chain corresponds to 165–187 (PQIIYGNVFNLDKLICGYHDEAI). The helical transmembrane segment at 188-215 (STVVLATQMTLGFFLPLLTMIVCYSVII) threads the bilayer. The Cytoplasmic segment spans residues 216–231 (KTLLHAGGFQKHRSLK). A helical transmembrane segment spans residues 232 to 259 (IIFLVMAVFLLTQMPFNLMKFIRSTHWE). The Extracellular portion of the chain corresponds to 260 to 275 (YYAMTSFHYTIMVTEA). A helical transmembrane segment spans residues 276–293 (IAYLRACLNPVLYAFVSL). Over 294–342 (KFRKNFWKLVKDIGCLPYLGVSHQWKSSEDNSKTFSASHNVEATSMFQL) the chain is Cytoplasmic.

It belongs to the G-protein coupled receptor 1 family. As to expression, expressed in lymphoid tissues and activated T cells.

The protein resides in the cell membrane. In terms of biological role, receptor for the C-X-C chemokine CXCL16. Used as a coreceptor by SIVs and by strains of HIV-2 and m-tropic HIV-1. This is C-X-C chemokine receptor type 6 (CXCR6) from Homo sapiens (Human).